A 764-amino-acid polypeptide reads, in one-letter code: 5-methyltetrahydropteroyltriglutamate--homocysteine methyltransferase (764 aa).

5-methyltetrahydropteroyltri-L-glutamate-binding positions include arginine 16 to lysine 19 and lysine 115. L-homocysteine contacts are provided by residues isoleucine 435–serine 437 and glutamate 488. L-methionine contacts are provided by residues isoleucine 435–serine 437 and glutamate 488. 5-methyltetrahydropteroyltri-L-glutamate is bound by residues arginine 519–cysteine 520 and tryptophan 565. Residue aspartate 603 participates in L-homocysteine binding. Aspartate 603 serves as a coordination point for L-methionine. Glutamate 609 is a 5-methyltetrahydropteroyltri-L-glutamate binding site. Residues histidine 645, cysteine 647, and glutamate 669 each contribute to the Zn(2+) site. Histidine 698 functions as the Proton donor in the catalytic mechanism. Cysteine 730 is a Zn(2+) binding site.

This sequence belongs to the vitamin-B12 independent methionine synthase family. It depends on Zn(2+) as a cofactor.

The enzyme catalyses 5-methyltetrahydropteroyltri-L-glutamate + L-homocysteine = tetrahydropteroyltri-L-glutamate + L-methionine. Its pathway is amino-acid biosynthesis; L-methionine biosynthesis via de novo pathway; L-methionine from L-homocysteine (MetE route): step 1/1. Its function is as follows. Catalyzes the transfer of a methyl group from 5-methyltetrahydrofolate to homocysteine resulting in methionine formation. This chain is 5-methyltetrahydropteroyltriglutamate--homocysteine methyltransferase, found in Burkholderia pseudomallei (strain 668).